The chain runs to 451 residues: ATP synthase subunit beta (451 aa).

Position 143-150 (143-150) interacts with ATP; that stretch reads GGAGVGKT.

Belongs to the ATPase alpha/beta chains family. As to quaternary structure, F-type ATPases have 2 components, CF(1) - the catalytic core - and CF(0) - the membrane proton channel. CF(1) has five subunits: alpha(3), beta(3), gamma(1), delta(1), epsilon(1). CF(0) has three main subunits: a(1), b(2) and c(9-12). The alpha and beta chains form an alternating ring which encloses part of the gamma chain. CF(1) is attached to CF(0) by a central stalk formed by the gamma and epsilon chains, while a peripheral stalk is formed by the delta and b chains.

It localises to the cell membrane. It catalyses the reaction ATP + H2O + 4 H(+)(in) = ADP + phosphate + 5 H(+)(out). Produces ATP from ADP in the presence of a proton gradient across the membrane. The catalytic sites are hosted primarily by the beta subunits. The polypeptide is ATP synthase subunit beta (Coprothermobacter proteolyticus (strain ATCC 35245 / DSM 5265 / OCM 4 / BT)).